The chain runs to 605 residues: Elongation factor 4 (605 aa).

One can recognise a tr-type G domain in the interval 9–192 (CRIRNFCIIA…SIVHRIPPPA (184 aa)). GTP-binding positions include 21 to 26 (DHGKST) and 139 to 142 (NKID).

The protein belongs to the TRAFAC class translation factor GTPase superfamily. Classic translation factor GTPase family. LepA subfamily.

It is found in the cell inner membrane. The enzyme catalyses GTP + H2O = GDP + phosphate + H(+). Required for accurate and efficient protein synthesis under certain stress conditions. May act as a fidelity factor of the translation reaction, by catalyzing a one-codon backward translocation of tRNAs on improperly translocated ribosomes. Back-translocation proceeds from a post-translocation (POST) complex to a pre-translocation (PRE) complex, thus giving elongation factor G a second chance to translocate the tRNAs correctly. Binds to ribosomes in a GTP-dependent manner. This Chlorobium chlorochromatii (strain CaD3) protein is Elongation factor 4.